Here is a 634-residue protein sequence, read N- to C-terminus: Polyadenylate-binding protein 1A (634 aa).

RRM domains are found at residues 11 to 89 (ASLY…WSQR), 99 to 175 (GNIF…RFKS), 191 to 268 (TNVY…RAQK), and 294 to 370 (VNLY…LAQR). In terms of domain architecture, PABC spans 541–618 (QEPLTASMLA…AVAVLQAHQA (78 aa)).

The protein belongs to the polyadenylate-binding protein type-1 family. In terms of assembly, interacts with ybx1; interaction recruits pabpc1a on C5-methylcytosine (m5C)-containing mRNAs, preventing their degradation.

The protein localises to the cytoplasm. Functionally, binds the poly(A) tail of mRNA. Prevents mRNA deadenylation and confers poly(A) stability. Binds to N6-methyladenosine (m6A)-containing mRNAs. Stimulates the translation of mRNAs to which it is bound, acting, at least in part, with dazl. Involved in the maternal-to-zygotic transition in early embryo via interaction with ybx1: interaction recruits pabpc1a on C5-methylcytosine (m5C)-containing maternal mRNAs, preventing their degradation. This is Polyadenylate-binding protein 1A from Danio rerio (Zebrafish).